Here is a 465-residue protein sequence, read N- to C-terminus: ATP synthase subunit beta (465 aa).

Residue 148–155 (GGAGVGKT) participates in ATP binding.

Belongs to the ATPase alpha/beta chains family. In terms of assembly, F-type ATPases have 2 components, CF(1) - the catalytic core - and CF(0) - the membrane proton channel. CF(1) has five subunits: alpha(3), beta(3), gamma(1), delta(1), epsilon(1). CF(0) has three main subunits: a(1), b(2) and c(9-12). The alpha and beta chains form an alternating ring which encloses part of the gamma chain. CF(1) is attached to CF(0) by a central stalk formed by the gamma and epsilon chains, while a peripheral stalk is formed by the delta and b chains.

It is found in the cell inner membrane. It catalyses the reaction ATP + H2O + 4 H(+)(in) = ADP + phosphate + 5 H(+)(out). Functionally, produces ATP from ADP in the presence of a proton gradient across the membrane. The catalytic sites are hosted primarily by the beta subunits. This Neisseria meningitidis serogroup C (strain 053442) protein is ATP synthase subunit beta.